The chain runs to 156 residues: Small ribosomal subunit protein uS7 (156 aa).

Belongs to the universal ribosomal protein uS7 family. Part of the 30S ribosomal subunit. Contacts proteins S9 and S11.

Functionally, one of the primary rRNA binding proteins, it binds directly to 16S rRNA where it nucleates assembly of the head domain of the 30S subunit. Is located at the subunit interface close to the decoding center, probably blocks exit of the E-site tRNA. This is Small ribosomal subunit protein uS7 from Polynucleobacter asymbioticus (strain DSM 18221 / CIP 109841 / QLW-P1DMWA-1) (Polynucleobacter necessarius subsp. asymbioticus).